A 289-amino-acid chain; its full sequence is ATP synthase gamma chain (289 aa).

Belongs to the ATPase gamma chain family. As to quaternary structure, F-type ATPases have 2 components, CF(1) - the catalytic core - and CF(0) - the membrane proton channel. CF(1) has five subunits: alpha(3), beta(3), gamma(1), delta(1), epsilon(1). CF(0) has three main subunits: a, b and c.

The protein resides in the cell membrane. Its function is as follows. Produces ATP from ADP in the presence of a proton gradient across the membrane. The gamma chain is believed to be important in regulating ATPase activity and the flow of protons through the CF(0) complex. The sequence is that of ATP synthase gamma chain from Lawsonia intracellularis (strain PHE/MN1-00).